A 249-amino-acid polypeptide reads, in one-letter code: UPF0524 protein C3orf70 homolog B (249 aa).

The segment at 174–230 (GPKMGHCSSPSTSEDSGINALGGHFLESCEEESEEEDELSTDGHSSPGSLWDQDECT) is disordered. Residues 201 to 213 (SCEEESEEEDELS) show a composition bias toward acidic residues.

Belongs to the UPF0524 family.

Functionally, plays a role in neuronal and neurobehavioral development. Required for normal expression of the postmitotic and mature neuron markers elavl3 and eno2 and neurobehaviors related to circadian rhythm and altered light-dark conditions. The chain is UPF0524 protein C3orf70 homolog B from Danio rerio (Zebrafish).